The sequence spans 64 residues: Large ribosomal subunit protein bL35 (64 aa).

It belongs to the bacterial ribosomal protein bL35 family.

The polypeptide is Large ribosomal subunit protein bL35 (Alcanivorax borkumensis (strain ATCC 700651 / DSM 11573 / NCIMB 13689 / SK2)).